The primary structure comprises 519 residues: Protein nucleotidyltransferase YdiU (519 aa).

ATP-binding residues include Gly-100, Gly-102, Arg-103, Lys-123, Asp-135, Gly-136, Arg-193, and Arg-200. Catalysis depends on Asp-270, which acts as the Proton acceptor. Positions 271 and 280 each coordinate Mg(2+). Residue Asp-280 coordinates ATP.

The protein belongs to the SELO family. It depends on Mg(2+) as a cofactor. Requires Mn(2+) as cofactor.

It catalyses the reaction L-seryl-[protein] + ATP = 3-O-(5'-adenylyl)-L-seryl-[protein] + diphosphate. The catalysed reaction is L-threonyl-[protein] + ATP = 3-O-(5'-adenylyl)-L-threonyl-[protein] + diphosphate. The enzyme catalyses L-tyrosyl-[protein] + ATP = O-(5'-adenylyl)-L-tyrosyl-[protein] + diphosphate. It carries out the reaction L-histidyl-[protein] + UTP = N(tele)-(5'-uridylyl)-L-histidyl-[protein] + diphosphate. It catalyses the reaction L-seryl-[protein] + UTP = O-(5'-uridylyl)-L-seryl-[protein] + diphosphate. The catalysed reaction is L-tyrosyl-[protein] + UTP = O-(5'-uridylyl)-L-tyrosyl-[protein] + diphosphate. Functionally, nucleotidyltransferase involved in the post-translational modification of proteins. It can catalyze the addition of adenosine monophosphate (AMP) or uridine monophosphate (UMP) to a protein, resulting in modifications known as AMPylation and UMPylation. The chain is Protein nucleotidyltransferase YdiU from Xylella fastidiosa (strain Temecula1 / ATCC 700964).